The chain runs to 226 residues: Urease accessory protein UreF (226 aa).

This sequence belongs to the UreF family. As to quaternary structure, ureD, UreF and UreG form a complex that acts as a GTP-hydrolysis-dependent molecular chaperone, activating the urease apoprotein by helping to assemble the nickel containing metallocenter of UreC. The UreE protein probably delivers the nickel.

The protein resides in the cytoplasm. In terms of biological role, required for maturation of urease via the functional incorporation of the urease nickel metallocenter. This is Urease accessory protein UreF from Burkholderia vietnamiensis (strain G4 / LMG 22486) (Burkholderia cepacia (strain R1808)).